Here is a 276-residue protein sequence, read N- to C-terminus: Ribosomal RNA small subunit methyltransferase A (276 aa).

S-adenosyl-L-methionine is bound by residues Asn19, Leu21, Gly46, Glu71, Asp94, and Asn117.

It belongs to the class I-like SAM-binding methyltransferase superfamily. rRNA adenine N(6)-methyltransferase family. RsmA subfamily.

Its subcellular location is the cytoplasm. The enzyme catalyses adenosine(1518)/adenosine(1519) in 16S rRNA + 4 S-adenosyl-L-methionine = N(6)-dimethyladenosine(1518)/N(6)-dimethyladenosine(1519) in 16S rRNA + 4 S-adenosyl-L-homocysteine + 4 H(+). Its function is as follows. Specifically dimethylates two adjacent adenosines (A1518 and A1519) in the loop of a conserved hairpin near the 3'-end of 16S rRNA in the 30S particle. May play a critical role in biogenesis of 30S subunits. This Burkholderia ambifaria (strain ATCC BAA-244 / DSM 16087 / CCUG 44356 / LMG 19182 / AMMD) (Burkholderia cepacia (strain AMMD)) protein is Ribosomal RNA small subunit methyltransferase A.